Here is a 695-residue protein sequence, read N- to C-terminus: Parasporal crystal protein Cry18Ca (695 aa).

Belongs to the delta endotoxin family.

Functionally, binds to the brush border membrane vesicles of scarab larvae and damages the gut wall somehow to allow the vegetative cells of P.popilliae to enter the hemolymph. The sequence is that of Parasporal crystal protein Cry18Ca (cry18Ca) from Paenibacillus popilliae (Bacillus popilliae).